A 312-amino-acid chain; its full sequence is Ribosomal protein L11 methyltransferase (312 aa).

Residues T160, G181, D203, and N246 each contribute to the S-adenosyl-L-methionine site.

This sequence belongs to the methyltransferase superfamily. PrmA family.

The protein resides in the cytoplasm. It carries out the reaction L-lysyl-[protein] + 3 S-adenosyl-L-methionine = N(6),N(6),N(6)-trimethyl-L-lysyl-[protein] + 3 S-adenosyl-L-homocysteine + 3 H(+). Its function is as follows. Methylates ribosomal protein L11. This chain is Ribosomal protein L11 methyltransferase, found in Staphylococcus carnosus (strain TM300).